The following is a 314-amino-acid chain: Transmembrane protein 248 (314 aa).

Residues 21 to 41 (VVFMISVSAMAIAFLTLGYFF) form a helical membrane-spanning segment. Positions 78–106 (LTNDTTTPESTMTSGQARASTQSPQALED) are disordered. The segment covering 80 to 102 (NDTTTPESTMTSGQARASTQSPQ) has biased composition (polar residues). Transmembrane regions (helical) follow at residues 179–199 (QVVF…PVTV), 236–258 (FWCY…TVIV), and 270–290 (LMHT…YAVI).

This sequence belongs to the TMEM248 family.

Its subcellular location is the membrane. The polypeptide is Transmembrane protein 248 (TMEM248) (Homo sapiens (Human)).